The sequence spans 159 residues: Cytochrome c-type biogenesis protein CcmE (159 aa).

The Cytoplasmic portion of the chain corresponds to 1-8; it reads MNIRRKNR. A helical; Signal-anchor for type II membrane protein membrane pass occupies residues 9–29; that stretch reads LWIACAVLAGLALTITLVLYA. Over 30-159 the chain is Periplasmic; it reads LRSNIDLFYT…PESVYKDKAS (130 aa). Residues histidine 130 and tyrosine 134 each contribute to the heme site. Residues 130-159 are disordered; it reads HDENYTPPEVEKAMQENHRRPESVYKDKAS.

This sequence belongs to the CcmE/CycJ family.

The protein localises to the cell inner membrane. Its function is as follows. Heme chaperone required for the biogenesis of c-type cytochromes. Transiently binds heme delivered by CcmC and transfers the heme to apo-cytochromes in a process facilitated by CcmF and CcmH. The sequence is that of Cytochrome c-type biogenesis protein CcmE from Citrobacter koseri (strain ATCC BAA-895 / CDC 4225-83 / SGSC4696).